The sequence spans 240 residues: Putative N-acetylmannosamine-6-phosphate 2-epimerase (240 aa).

Belongs to the NanE family.

It catalyses the reaction an N-acyl-D-glucosamine 6-phosphate = an N-acyl-D-mannosamine 6-phosphate. Its pathway is amino-sugar metabolism; N-acetylneuraminate degradation; D-fructose 6-phosphate from N-acetylneuraminate: step 3/5. Converts N-acetylmannosamine-6-phosphate (ManNAc-6-P) to N-acetylglucosamine-6-phosphate (GlcNAc-6-P). In Vibrio cholerae serotype O1 (strain ATCC 39315 / El Tor Inaba N16961), this protein is Putative N-acetylmannosamine-6-phosphate 2-epimerase.